Here is a 245-residue protein sequence, read N- to C-terminus: tRNA (guanine-N(1)-)-methyltransferase (245 aa).

Residues glycine 114 and 134 to 139 (IGDYIL) each bind S-adenosyl-L-methionine.

The protein belongs to the RNA methyltransferase TrmD family. In terms of assembly, homodimer.

It is found in the cytoplasm. The enzyme catalyses guanosine(37) in tRNA + S-adenosyl-L-methionine = N(1)-methylguanosine(37) in tRNA + S-adenosyl-L-homocysteine + H(+). In terms of biological role, specifically methylates guanosine-37 in various tRNAs. This chain is tRNA (guanine-N(1)-)-methyltransferase, found in Listeria welshimeri serovar 6b (strain ATCC 35897 / DSM 20650 / CCUG 15529 / CIP 8149 / NCTC 11857 / SLCC 5334 / V8).